Here is a 63-residue protein sequence, read N- to C-terminus: Large ribosomal subunit protein uL29 (63 aa).

Belongs to the universal ribosomal protein uL29 family.

The chain is Large ribosomal subunit protein uL29 from Tolumonas auensis (strain DSM 9187 / NBRC 110442 / TA 4).